A 62-amino-acid polypeptide reads, in one-letter code: Alpha-elapitoxin-Nn2a (62 aa).

The segment at 1-20 (LECHNQQSSQTPTTTDCSGG) is disordered. Intrachain disulfides connect cysteine 3–cysteine 24, cysteine 17–cysteine 41, cysteine 43–cysteine 54, and cysteine 55–cysteine 60.

This sequence belongs to the three-finger toxin family. Short-chain subfamily. Type I alpha-neurotoxin sub-subfamily. As to expression, expressed by the venom gland.

Its subcellular location is the secreted. Functionally, nicotinic acetylcholine receptor antagonist. Binds to muscle nicotinic acetylcholine receptor (nAChR) and inhibits acetylcholine from binding to the receptor, thereby impairing neuromuscular transmission. Produces peripheral paralysis by blocking neuromuscular transmission at the postsynaptic site. Induces concentration-dependent inhibition of indirect twitches and abolishes contractile responses of tissues to exogenous acetylcholine and carbachol, in the chick biventer cervicis nerve-muscle preparation at 100-300 nM (in vitro). Prior incubation of tissues with Indian polyvalent antivenom (1 ml/0.6 mg) prevents the neurotoxic effects at 100 nM (in vitro). Addition of Indian polyvalent antivenom (1 ml/0.6 mg) at the t90 time point does not reverse the neurotoxic effects (in vitro). Displays non-competitive antagonism of concentration-response curves to carbachol, with a pA2 of 8.01 (in vitro). This Naja naja (Indian cobra) protein is Alpha-elapitoxin-Nn2a.